The following is a 236-amino-acid chain: Ribonuclease 3 (236 aa).

The 130-residue stretch at 7-136 (KSYILKKFNI…FIGALYLDQG (130 aa)) folds into the RNase III domain. Glu-49 is a Mg(2+) binding site. Residue Asp-53 is part of the active site. Mg(2+) is bound by residues Asp-122 and Glu-125. Glu-125 is an active-site residue. One can recognise a DRBM domain in the interval 162–232 (DFKSRLQERL…ARAALKILED (71 aa)).

This sequence belongs to the ribonuclease III family. In terms of assembly, homodimer. Mg(2+) is required as a cofactor.

Its subcellular location is the cytoplasm. The enzyme catalyses Endonucleolytic cleavage to 5'-phosphomonoester.. Its function is as follows. Digests double-stranded RNA. Involved in the processing of primary rRNA transcript to yield the immediate precursors to the large and small rRNAs (23S and 16S). Processes some mRNAs, and tRNAs when they are encoded in the rRNA operon. Processes pre-crRNA and tracrRNA of type II CRISPR loci if present in the organism. This is Ribonuclease 3 from Leuconostoc mesenteroides subsp. mesenteroides (strain ATCC 8293 / DSM 20343 / BCRC 11652 / CCM 1803 / JCM 6124 / NCDO 523 / NBRC 100496 / NCIMB 8023 / NCTC 12954 / NRRL B-1118 / 37Y).